A 436-amino-acid polypeptide reads, in one-letter code: Gamma-glutamyl phosphate reductase (436 aa).

Belongs to the gamma-glutamyl phosphate reductase family.

It is found in the cytoplasm. It catalyses the reaction L-glutamate 5-semialdehyde + phosphate + NADP(+) = L-glutamyl 5-phosphate + NADPH + H(+). It functions in the pathway amino-acid biosynthesis; L-proline biosynthesis; L-glutamate 5-semialdehyde from L-glutamate: step 2/2. Its function is as follows. Catalyzes the NADPH-dependent reduction of L-glutamate 5-phosphate into L-glutamate 5-semialdehyde and phosphate. The product spontaneously undergoes cyclization to form 1-pyrroline-5-carboxylate. The sequence is that of Gamma-glutamyl phosphate reductase from Prochlorococcus marinus (strain MIT 9215).